The following is a 273-amino-acid chain: ATP synthase subunit a (273 aa).

Transmembrane regions (helical) follow at residues 42–62 (TLNI…LFIF), 102–122 (VIAP…MMDL), 148–168 (DVSI…FYSI), 213–233 (LFGN…LLPW), and 244–264 (AIFH…LTIV).

It belongs to the ATPase A chain family. In terms of assembly, F-type ATPases have 2 components, CF(1) - the catalytic core - and CF(0) - the membrane proton channel. CF(1) has five subunits: alpha(3), beta(3), gamma(1), delta(1), epsilon(1). CF(0) has three main subunits: a(1), b(2) and c(9-12). The alpha and beta chains form an alternating ring which encloses part of the gamma chain. CF(1) is attached to CF(0) by a central stalk formed by the gamma and epsilon chains, while a peripheral stalk is formed by the delta and b chains.

Its subcellular location is the cell inner membrane. In terms of biological role, key component of the proton channel; it plays a direct role in the translocation of protons across the membrane. This Serratia proteamaculans (strain 568) protein is ATP synthase subunit a.